A 132-amino-acid polypeptide reads, in one-letter code: D-ribose pyranase (132 aa).

H20 serves as the catalytic Proton donor. Substrate contacts are provided by residues D28, H99, and 121–123 (YSN).

This sequence belongs to the RbsD / FucU family. RbsD subfamily. In terms of assembly, homodecamer.

It is found in the cytoplasm. The catalysed reaction is beta-D-ribopyranose = beta-D-ribofuranose. It participates in carbohydrate metabolism; D-ribose degradation; D-ribose 5-phosphate from beta-D-ribopyranose: step 1/2. Its function is as follows. Catalyzes the interconversion of beta-pyran and beta-furan forms of D-ribose. The chain is D-ribose pyranase from Lactococcus lactis subsp. cremoris (strain MG1363).